The following is a 1865-amino-acid chain: Dedicator of cytokinesis protein 1 (1865 aa).

Positions 9 to 70 constitute an SH3 domain; that stretch reads REEKYGVAFY…PASYIHLKEA (62 aa). One can recognise a C2 DOCK-type domain in the interval 425–609; sequence RNDIYVTLVQ…DSFQISTLVC (185 aa). Residues 1207 to 1617 enclose the DOCKER domain; the sequence is YKEIEREEMY…VEKQYGVRTM (411 aa). Residues 1613–1723 form a disordered region; sequence GVRTMPSGLD…FKPADSSLQQ (111 aa). The span at 1639–1664 shows a compositional bias: low complexity; the sequence is PSSSRPLSVASVSSFSSDSTPSRPGS. Basic and acidic residues predominate over residues 1680–1694; that stretch reads RSQDKLDKDDPDKEK. S1681 is subject to Phosphoserine. Residues 1687–1695 form a phosphoinositide-binding region; it reads KDDPDKEKK. Positions 1695 to 1704 are enriched in basic residues; that stretch reads KDKKKEKRNS. Positions 1705–1716 are enriched in basic and acidic residues; the sequence is KHQEIFDKEFKP. Phosphoserine is present on residues S1743, S1756, S1761, and S1764. 2 disordered regions span residues 1753–1778 and 1801–1865; these read RRFSVSPASPSSQQTPPPVTPRAKLS and PLPL…GIVQ. The span at 1756–1766 shows a compositional bias: low complexity; that stretch reads SVSPASPSSQQ. Residues T1767 and T1772 each carry the phosphothreonine modification. An interaction with NCK2 second and third SH3 domain (minor) region spans residues 1793–1819; it reads MDVADVPPPLPLKGNMADYGNLMENQD. Positions 1799-1805 match the SH3-binding; interaction with CRK motif; sequence PPPLPLK. The segment at 1820–1836 is interaction with NCK2 third SH3 domain (major); sequence MMVSPTSPPPPPPQRQQ. A compositionally biased stretch (pro residues) spans 1825 to 1851; the sequence is TSPPPPPPQRQQPPPLPSKTPPPPPPK. Residues 1837–1852 are interaction with NCK2 (minor); sequence PPPLPSKTPPPPPPKT. The SH3-binding; interaction with CRK motif lies at 1838-1843; sequence PPLPSK. S1858 bears the Phosphoserine mark.

This sequence belongs to the DOCK family. Interacts with the SH3 domains of CRK and NCK2 via multiple sites. Interacts with nucleotide-free RAC1 via its DOCKER domain. Interacts with ELMO1, ELMO2 and probably ELMO3 via its SH3 domain. Interacts with RAC1. Interacts with ELMO1 and ADGRB1. Identified in a complex with AUTS2 and ELMO2.

It localises to the cytoplasm. Its subcellular location is the membrane. In terms of biological role, involved in cytoskeletal rearrangements required for phagocytosis of apoptotic cells and cell motility. Along with DOCK1, mediates CRK/CRKL regulation of epithelial and endothelial cell spreading and migration on type IV collagen. Functions as a guanine nucleotide exchange factor (GEF), which activates Rac Rho small GTPases by exchanging bound GDP for free GTP. Its GEF activity may be enhanced by ELMO1. In Mus musculus (Mouse), this protein is Dedicator of cytokinesis protein 1 (Dock1).